Consider the following 634-residue polypeptide: GTP-binding protein 4 (634 aa).

Alanine 2 is subject to N-acetylalanine. The residue at position 103 (lysine 103) is an N6-acetyllysine; alternate. A Glycyl lysine isopeptide (Lys-Gly) (interchain with G-Cter in SUMO2); alternate cross-link involves residue lysine 103. The residue at position 122 (serine 122) is a Phosphoserine. The 172-residue stretch at 169–340 (RTLLLCGYPN…VKTEACDRLL (172 aa)) folds into the OBG-type G domain. GTP contacts are provided by residues 175 to 182 (GYPNVGKS), 221 to 225 (DTPGI), and 289 to 292 (NKCD). A Glycyl lysine isopeptide (Lys-Gly) (interchain with G-Cter in SUMO2) cross-link involves residue lysine 332. A phosphoserine mark is found at serine 468, serine 470, and serine 472. The disordered stretch occupies residues 494-634 (KILQSKEKNK…KRKAGKKDRR (141 aa)). A Glycyl lysine isopeptide (Lys-Gly) (interchain with G-Cter in SUMO2) cross-link involves residue lysine 534. Residues 544 to 554 (RRSRSVTRKRK) show a composition bias toward basic residues. Serine 558 is modified (phosphoserine). Low complexity predominate over residues 560–572 (PPSSTARSRSCSR). Residues 573-585 (TPRDVSGLRDVKM) are compositionally biased toward basic and acidic residues. The segment covering 586–604 (VKKAKTMMKKAQKKMNRLG) has biased composition (basic residues). Over residues 605 to 618 (KKGEADRHVFDMKP) the composition is skewed to basic and acidic residues. Residues 619–634 (KHLLSGKRKAGKKDRR) are compositionally biased toward basic residues.

Belongs to the TRAFAC class OBG-HflX-like GTPase superfamily. OBG GTPase family. NOG subfamily. As to quaternary structure, associates with pre-60S ribosomal particles. Interacts with MINAS-60 (product of an alternative open reading frame of RBM10). As to expression, ubiquitous.

The protein localises to the nucleus. Its subcellular location is the nucleolus. Involved in the biogenesis of the 60S ribosomal subunit. Acts as TP53 repressor, preventing TP53 stabilization and cell cycle arrest. The sequence is that of GTP-binding protein 4 (Gtpbp4) from Mus musculus (Mouse).